A 222-amino-acid chain; its full sequence is Iodotyrosine deiodinase (222 aa).

Residues Arg-34–Arg-38 and Pro-61–Ser-62 contribute to the FMN site. 3 residues coordinate 3-iodo-L-tyrosine: Glu-91, Tyr-95, and Lys-116. FMN is bound by residues Thr-171 to Thr-173 and Arg-212.

This sequence belongs to the nitroreductase family. Homodimer. It depends on FMN as a cofactor.

The enzyme catalyses 2 iodide + L-tyrosine + 2 NADP(+) = 3,5-diiodo-L-tyrosine + 2 NADPH + H(+). It carries out the reaction iodide + L-tyrosine + NADP(+) = 3-iodo-L-tyrosine + NADPH. It catalyses the reaction 3-iodo-L-tyrosine + iodide + NADP(+) = 3,5-diiodo-L-tyrosine + NADPH + H(+). The catalysed reaction is L-tyrosine + chloride + NADP(+) = 3-chloro-L-tyrosine + NADPH. The enzyme catalyses bromide + L-tyrosine + NADP(+) = 3-bromo-L-tyrosine + NADPH. In terms of biological role, catalyzes the dehalogenation of halotyrosines such as 3-iodo-L-tyrosine and 3,5-diiodo-L-tyrosine. Likely to also catalyze the dehalogenation of other halotyrosines such as 3-bromo-L-tyrosine, 3-chloro-L-tyrosine and 3-iodo-L-tyrosine. Activity towards 3-iodo-L-tyrosine is much stronger than activity towards 3,5-diiodo-L-tyrosine and 2-iodophenol. This is Iodotyrosine deiodinase from Haliscomenobacter hydrossis (strain ATCC 27775 / DSM 1100 / LMG 10767 / O).